The chain runs to 89 residues: Putative defensin-like protein 89 (89 aa).

An N-terminal signal peptide occupies residues 1–25 (MGFKNNLSLVSVMVFALILLPMISG). 4 disulfides stabilise this stretch: cysteine 30/cysteine 66, cysteine 36/cysteine 57, cysteine 42/cysteine 64, and cysteine 46/cysteine 65.

It belongs to the DEFL family.

Its subcellular location is the secreted. The protein is Putative defensin-like protein 89 of Arabidopsis thaliana (Mouse-ear cress).